A 653-amino-acid chain; its full sequence is MGHGTNRVEDMASPNNGTAGETVVEIHSVCLPPKKTAFQKLKKRVGDVFFPDDPLQRFRNQTWRNRVILGLQSLFPIFTWGSQYDLKLLRSDVISGLTIASLAIPQGISYAKLANLPPIVGLYSSFVPPLIYAVLGSSRHLAVGPVSIASLVMGSMLSESVSPTQDSILYLKLAFTSTFFAGVFQASLGLLRLGFMIDFLSKATLIGFTAGAAVIVSLQQLKGLLGIVHFTGKMQIVPVMSSVFNHRSEWSWETIVMGIGFLSILLTTRHISMRKPKLFWISAASPLASVIISTLLVYLIRSKTHAISFIGHLPKGLNPPSLNMLYFSGAHLALAIKTGIITGILSLTEGIAVGRTFASLKNYQVNGNKEMMAIGFMNMAGSCTSCYVTTGSFSRSAVNYNAGAKTAVSNIVMASAVLVTLLFLMPLFYYTPNVILAAIILTAVIGLIDYQAAYKLWKVDKFDFFTCLCSFFGVLFVSVPLGLAIAVAVSVIKILLHVTRPNTSEFGNIPGTQIYQSLGRYREASRIPGFLILAIESPIYFANSTYLQDRILRWAREEENRIKENNGTTLKCIILDMTAVSAIDTSGLEAVFELRRRLEKQSLQLVLVNPVGTVMEKLHKSKIIEALGLSGLYLTVGEAVADLSSTWKANGQP.

Residues 1–92 lie on the Cytoplasmic side of the membrane; it reads MGHGTNRVED…QYDLKLLRSD (92 aa). The helical transmembrane segment at 93-113 threads the bilayer; it reads VISGLTIASLAIPQGISYAKL. Residues 114-115 lie on the Extracellular side of the membrane; it reads AN. Residues 116-136 traverse the membrane as a helical segment; sequence LPPIVGLYSSFVPPLIYAVLG. Residues 137-140 are Cytoplasmic-facing; that stretch reads SSRH. Residues 141–161 form a helical membrane-spanning segment; sequence LAVGPVSIASLVMGSMLSESV. Residues 162-167 lie on the Extracellular side of the membrane; that stretch reads SPTQDS. The helical transmembrane segment at 168–188 threads the bilayer; it reads ILYLKLAFTSTFFAGVFQASL. The Cytoplasmic portion of the chain corresponds to 189–194; it reads GLLRLG. Residues 195-215 form a helical membrane-spanning segment; the sequence is FMIDFLSKATLIGFTAGAAVI. The Extracellular portion of the chain corresponds to 216 to 247; that stretch reads VSLQQLKGLLGIVHFTGKMQIVPVMSSVFNHR. The helical transmembrane segment at 248 to 268 threads the bilayer; it reads SEWSWETIVMGIGFLSILLTT. Residues 269 to 279 are Cytoplasmic-facing; the sequence is RHISMRKPKLF. The helical transmembrane segment at 280–300 threads the bilayer; it reads WISAASPLASVIISTLLVYLI. Residues 301-331 lie on the Extracellular side of the membrane; the sequence is RSKTHAISFIGHLPKGLNPPSLNMLYFSGAH. The helical transmembrane segment at 332–352 threads the bilayer; it reads LALAIKTGIITGILSLTEGIA. The Cytoplasmic portion of the chain corresponds to 353–370; that stretch reads VGRTFASLKNYQVNGNKE. A helical transmembrane segment spans residues 371-391; it reads MMAIGFMNMAGSCTSCYVTTG. The Extracellular segment spans residues 392–407; sequence SFSRSAVNYNAGAKTA. The helical transmembrane segment at 408-428 threads the bilayer; it reads VSNIVMASAVLVTLLFLMPLF. Over 429–433 the chain is Cytoplasmic; that stretch reads YYTPN. Residues 434-454 form a helical membrane-spanning segment; it reads VILAAIILTAVIGLIDYQAAY. Residues 455 to 471 lie on the Extracellular side of the membrane; sequence KLWKVDKFDFFTCLCSF. Residues 472-492 traverse the membrane as a helical segment; it reads FGVLFVSVPLGLAIAVAVSVI. The Cytoplasmic portion of the chain corresponds to 493 to 653; that stretch reads KILLHVTRPN…SSTWKANGQP (161 aa). Residues 520 to 643 enclose the STAS domain; it reads RYREASRIPG…LTVGEAVADL (124 aa).

This sequence belongs to the SLC26A/SulP transporter (TC 2.A.53) family.

Its subcellular location is the membrane. In terms of biological role, h(+)/sulfate cotransporter that may play a role in the regulation of sulfate assimilation. The protein is Probable sulfate transporter 3.4 (SULTR3;4) of Arabidopsis thaliana (Mouse-ear cress).